Reading from the N-terminus, the 270-residue chain is NAD kinase (270 aa).

The active-site Proton acceptor is the D49. NAD(+) contacts are provided by residues 49 to 50, R54, 126 to 127, R152, D154, 165 to 170, A189, and Q227; these read DG, NE, and TAYNKS.

Belongs to the NAD kinase family. A divalent metal cation serves as cofactor.

The protein resides in the cytoplasm. It catalyses the reaction NAD(+) + ATP = ADP + NADP(+) + H(+). In terms of biological role, involved in the regulation of the intracellular balance of NAD and NADP, and is a key enzyme in the biosynthesis of NADP. Catalyzes specifically the phosphorylation on 2'-hydroxyl of the adenosine moiety of NAD to yield NADP. In Lactococcus lactis subsp. lactis (strain IL1403) (Streptococcus lactis), this protein is NAD kinase.